Here is a 502-residue protein sequence, read N- to C-terminus: Maturase K (502 aa).

The protein belongs to the intron maturase 2 family. MatK subfamily.

The protein resides in the plastid. It localises to the chloroplast. Its function is as follows. Usually encoded in the trnK tRNA gene intron. Probably assists in splicing its own and other chloroplast group II introns. The polypeptide is Maturase K (Cephalotaxus fortunei (Chinese plum-yew)).